Reading from the N-terminus, the 755-residue chain is Bacteriophytochrome (755 aa).

Cysteine 24 provides a ligand contact to a tetrapyrrole. One can recognise a PAS domain in the interval 26–94 (REPIHIPGSI…LQAALPPGCP (69 aa)). A chromophore binding domain region spans residues 95–504 (DALQYRATLD…RDTLTGALGE (410 aa)). Residues 152–316 (NLRALAEVAT…YLGRLLSLQV (165 aa)) enclose the GAF domain. A Histidine kinase domain is found at 529 to 747 (VISHHMQEPV…TFRCWLPDAG (219 aa)). Phosphohistidine; by autocatalysis is present on histidine 532.

This sequence in the N-terminal section; belongs to the phytochrome family. Post-translationally, contains one covalently linked tetrapyrrole chromophore. Lacks the cysteine conserved in plant phytochromes (at the position of Met-259) that binds chromophore. An engineered sequence used for X-ray crystallography forms a thioether link to biliverdin through Cys-24. The natural sequence can bind phycocyanobilin and phytochromobilin in vitro, but the identity of the natural chromophore is unknown.

The catalysed reaction is ATP + protein L-histidine = ADP + protein N-phospho-L-histidine.. Its function is as follows. Photoreceptor which exists in two forms that are reversibly interconvertible by light: the R form that absorbs maximally in the red region of the spectrum and the FR form that absorbs maximally in the far-red region. Also has a slight blue shift for the far-red maximum. Could also absorb green light. May participate in regulating pigment synthesis like the carotenoid deinoxanthin which could protect the bacterium from intense visible light. The sequence is that of Bacteriophytochrome (bphP) from Deinococcus radiodurans (strain ATCC 13939 / DSM 20539 / JCM 16871 / CCUG 27074 / LMG 4051 / NBRC 15346 / NCIMB 9279 / VKM B-1422 / R1).